The following is a 234-amino-acid chain: Glutamine synthetase (234 aa).

In terms of domain architecture, GS catalytic spans 1–234 (KAQEPWFGIE…TRLLVETTLL (234 aa)). Positions 126-157 (GSGGHVNFSNRQPESPPAGKQSRSSAKKLGKR) are disordered.

This sequence belongs to the glutamine synthetase family. In terms of assembly, homooctamer.

Its subcellular location is the cytoplasm. It catalyses the reaction L-glutamate + NH4(+) + ATP = L-glutamine + ADP + phosphate + H(+). The sequence is that of Glutamine synthetase from Dunaliella salina (Green alga).